We begin with the raw amino-acid sequence, 520 residues long: MALRVYNTLTRQQEHFQPWEHGHVRLYGCGPTVYNYPHLGNLRAYVFQDTVRRTLHFLGYRVTYVMNITDVGHLESDADSGEDKLVRSAQAHGHSVLQVAAHYRAAFFRDTALLGIEEPSIVCNASDCIQDMIAFIEQLLARGHAYCAGGNVYFDVRSFPSYESFGSAAVEDVQEGEDAARARVAHDTHKRDARDFVLWFTRSKFVRHALTWDSPWGRGYPGWHIGCSAMSMKFLGPRCDIHIGGVDHIRVHHRNERAQCEAITGAPWVRYWLHHEFLLMQLQKRAVHADMGSSVVSSFSKMSKSCGQFLTLSSLQERGFQPADFRFFLLSGQYRTQLAFSWDALKTARAARRSFVRRVARVVDAARATTGSVRGTSAECAAERVCESRASESELLLTDFRAALEDDFSTPRALSALQKLVRDTSVPPSLCVSALQVADTVLGLGIIQEATASLSAQVPAGDTLPQRPLPSEEWIGQLVRARAHARQTRDFPRADEIRRQLKAEGIELEDTHLGTIWKRV.

C29 is a binding site for Zn(2+). A 'HIGH' region motif is present at residues 31-41; the sequence is PTVYNYPHLGN. Residues C227, H252, and E256 each coordinate Zn(2+). The 'KMSKS' region signature appears at 301–305; the sequence is KMSKS. Residue K304 coordinates ATP.

It belongs to the class-I aminoacyl-tRNA synthetase family. As to quaternary structure, monomer. Zn(2+) serves as cofactor.

It is found in the cytoplasm. The enzyme catalyses tRNA(Cys) + L-cysteine + ATP = L-cysteinyl-tRNA(Cys) + AMP + diphosphate. The polypeptide is Cysteine--tRNA ligase (cysS) (Treponema pallidum (strain Nichols)).